A 676-amino-acid polypeptide reads, in one-letter code: Transcription factor RLM1 (676 aa).

The 55-residue stretch at 3–57 (RRKIEIQRISDDRNRAVTFIKRKAGLFKKAHELSVLCQVDIAVIILGSNNTFYEF) folds into the MADS-box domain. Positions 58 to 87 (SSVDTNDLIYHYQNDKNLLHEVKDPSDYGD) form a DNA-binding region, mef2-type. Residues 103-120 (SSMSNKPSKSNVKGMNQS) are compositionally biased toward polar residues. The interval 103-156 (SSMSNKPSKSNVKGMNQSENDDDENNDEDDDDHGNFERNSNMHSNKKASDKNIP) is disordered. Ser120 carries the phosphoserine modification. The segment covering 121 to 134 (ENDDDENNDEDDDD) has biased composition (acidic residues). Ser164 bears the Phosphoserine mark. Over residues 173–183 (DGSEQNKRHPE) the composition is skewed to basic and acidic residues. 5 disordered regions span residues 173–192 (DGSE…LQHL), 202–318 (ISRT…RRKL), 330–424 (NNNF…PFGS), 472–514 (KKQS…VHDL), and 532–631 (MGPN…NSST). Over residues 260–276 (ISPNKFSKPFTNASSRT) the composition is skewed to polar residues. Residues 284–295 (NNSGSNNNDNSN) show a composition bias toward low complexity. Residues 296-312 (YTQSPSNSLEDSIQQTV) show a composition bias toward polar residues. Composition is skewed to low complexity over residues 334–359 (SSNS…MGSS), 368–381 (SRSS…ASAS), and 399–417 (PNAN…NNNN). Phosphoserine is present on residues Ser374 and Ser377. Residues 472-506 (KKQSQTVPLTTTLTGRPPSTFSGPETSNGPPTGSL) show a composition bias toward polar residues. A compositionally biased stretch (low complexity) spans 539–604 (PGNTNNPGTF…NSNNSYYSNN (66 aa)). Positions 621–631 (GDSNNQSNSST) are enriched in polar residues.

It belongs to the MEF2 family. Can heterodimerize with SPM1. Interacts with KDX1 and SLT2. Phosphorylated by SLT2.

It localises to the nucleus. May function as a transcription factor downstream of MPK1 that is subject to activation by the MPK1 mitogen-activated protein kinase pathway. Binds to the DNA sequence 5'-CTA[TA](4)TAG-3'. At least some RML1 target genes are involved in cell wall biosynthesis. This is Transcription factor RLM1 (RLM1) from Saccharomyces cerevisiae (strain ATCC 204508 / S288c) (Baker's yeast).